The chain runs to 373 residues: Mitochondrial fission regulator 2 (373 aa).

Ser-136 carries the post-translational modification Phosphoserine. The stretch at 151 to 179 forms a coiled coil; sequence VSEAAIKKIAALEDELTSLRAQIAAIVAM. Disordered regions lie at residues 189–331 and 346–373; these read GFIS…WDPV and DDSF…GSRF. The span at 224-239 shows a compositional bias: pro residues; it reads SPPPLPPPPPPLPPPQ. Composition is skewed to basic and acidic residues over residues 275-287 and 297-310; these read KKTD…ESQR and VLKD…RPVE. Phosphoserine is present on residues Ser-312 and Ser-348. Polar residues predominate over residues 354–373; that stretch reads RSWQGSPFSSPETSRNGSRF.

It belongs to the MTFR1 family.

It localises to the mitochondrion. Functionally, may play a role in mitochondrial aerobic respiration essentially in the testis. Can also promote mitochondrial fission. The chain is Mitochondrial fission regulator 2 (Mtfr2) from Rattus norvegicus (Rat).